The primary structure comprises 339 residues: Large ribosomal subunit protein uL10 (339 aa).

The segment at 307–339 is disordered; it reads VEEEKKEEKVEEEKEDEEASEEEALAGLSALFG. The segment covering 308–318 has biased composition (basic and acidic residues); that stretch reads EEEKKEEKVEE. Positions 319 to 330 are enriched in acidic residues; it reads EKEDEEASEEEA.

Belongs to the universal ribosomal protein uL10 family. In terms of assembly, part of the 50S ribosomal subunit. Forms part of the ribosomal stalk which helps the ribosome interact with GTP-bound translation factors. Forms a heptameric L10(L12)2(L12)2(L12)2 complex, where L10 forms an elongated spine to which the L12 dimers bind in a sequential fashion.

Its function is as follows. Forms part of the ribosomal stalk, playing a central role in the interaction of the ribosome with GTP-bound translation factors. In Pyrococcus furiosus (strain ATCC 43587 / DSM 3638 / JCM 8422 / Vc1), this protein is Large ribosomal subunit protein uL10.